Here is a 262-residue protein sequence, read N- to C-terminus: MWNLAGKKLSSRLLLGTACYPSLEHMQQAIHNSGTEVITISIKRQTSAGLDGESFWQAVKKLDCHLLPNTAGCRNAEAAINTAEIARELFNTHWIKLEVIGDDYNLQPEPFELIKAARILIDRGFEVFPYCTDDLVLCQKLVDAGCKILMPWGAPIGSGKGLINPYALETLRYRFPDITLIIDAGIGKPSHAVQVMELGFDGVLLNTAVALANHPALMATAFRHAVIAGHQAFTGGMMSERNVAHPSTPLIDTPFWHQVNNL.

The Schiff-base intermediate with DXP role is filled by Lys-96. Residues Gly-157, 184-185, and 206-207 each bind 1-deoxy-D-xylulose 5-phosphate; these read AG and NT.

Belongs to the ThiG family. Homotetramer. Forms heterodimers with either ThiH or ThiS.

Its subcellular location is the cytoplasm. The enzyme catalyses [ThiS sulfur-carrier protein]-C-terminal-Gly-aminoethanethioate + 2-iminoacetate + 1-deoxy-D-xylulose 5-phosphate = [ThiS sulfur-carrier protein]-C-terminal Gly-Gly + 2-[(2R,5Z)-2-carboxy-4-methylthiazol-5(2H)-ylidene]ethyl phosphate + 2 H2O + H(+). It functions in the pathway cofactor biosynthesis; thiamine diphosphate biosynthesis. Functionally, catalyzes the rearrangement of 1-deoxy-D-xylulose 5-phosphate (DXP) to produce the thiazole phosphate moiety of thiamine. Sulfur is provided by the thiocarboxylate moiety of the carrier protein ThiS. In vitro, sulfur can be provided by H(2)S. The chain is Thiazole synthase from Legionella pneumophila (strain Lens).